Reading from the N-terminus, the 325-residue chain is uncharacterized protein (325 aa).

The N-terminal stretch at 1-26 is a signal peptide; sequence MQGRVAGSCAPLGLLLVCLHLPGLFA. A compositionally biased stretch (polar residues) spans 41–60; sequence GTNLPQLGQPSSTGPSNSEH. 2 disordered regions span residues 41–110 and 147–189; these read GTNL…MDSW and GSGP…AGGK. The span at 147–157 shows a compositional bias: low complexity; the sequence is GSGPLPGESSP.

Binds to numerous extracellular matrix proteins. In terms of tissue distribution, expressed in skin and tonsils.

Its subcellular location is the secreted. The protein localises to the extracellular space. It localises to the extracellular matrix. This is an uncharacterized protein from Homo sapiens (Human).